The chain runs to 288 residues: NAD(P)H-hydrate epimerase (288 aa).

The N-terminal 32 residues, 1-32 (MSGLRALLGLGLLVAGSRLSRVRVQAGSCRAG), are a transit peptide targeting the mitochondrion. Ser49 bears the Phosphoserine mark. Residues 65–275 (AQAVDQELFN…ALEKKYQLNL (211 aa)) enclose the YjeF N-terminal domain. 119-123 (NNGGD) serves as a coordination point for (6S)-NADPHX. Asn120 contributes to the K(+) binding site. Lys144 bears the N6-succinyllysine mark. Asp185 lines the K(+) pocket. Residues 189–195 (GFSFTGE) and Asp218 each bind (6S)-NADPHX. Ser221 lines the K(+) pocket.

It belongs to the NnrE/AIBP family. In terms of assembly, homodimer. Interacts with APOA1 and APOA2. The cofactor is K(+). Post-translationally, undergoes physiological phosphorylation during sperm capacitation, downstream to PKA activation.

The protein resides in the mitochondrion. The protein localises to the secreted. It catalyses the reaction (6R)-NADHX = (6S)-NADHX. The catalysed reaction is (6R)-NADPHX = (6S)-NADPHX. Its function is as follows. Catalyzes the epimerization of the S- and R-forms of NAD(P)HX, a damaged form of NAD(P)H that is a result of enzymatic or heat-dependent hydration. This is a prerequisite for the S-specific NAD(P)H-hydrate dehydratase to allow the repair of both epimers of NAD(P)HX. Accelerates cholesterol efflux from endothelial cells to high-density lipoprotein (HDL) and thereby regulates angiogenesis. This chain is NAD(P)H-hydrate epimerase, found in Bos taurus (Bovine).